The chain runs to 95 residues: Synaptobrevin-A (95 aa).

Residues 1–70 (MSEPVNKVKQ…KRLMWCRNIK (70 aa)) are Cytoplasmic-facing. The v-SNARE coiled-coil homology domain occupies 7 to 67 (KVKQTQQQVD…NEIKRLMWCR (61 aa)). The helical; Anchor for type IV membrane protein transmembrane segment at 71 to 91 (LTLIIIAVVVLLLVVIIVPIV) threads the bilayer. At 92 to 95 (LKFT) the chain is on the vesicular side.

This sequence belongs to the synaptobrevin family.

The protein resides in the cytoplasmic vesicle. The protein localises to the secretory vesicle membrane. Functionally, involved in the targeting and/or fusion of transport vesicles to their target membrane. In Dictyostelium discoideum (Social amoeba), this protein is Synaptobrevin-A (sybA).